A 706-amino-acid chain; its full sequence is Serine/threonine-protein kinase BUR1 (706 aa).

One can recognise a Protein kinase domain in the interval 38–339 (YKPLGKIGEG…AIGGKNHAYF (302 aa)). ATP contacts are provided by residues 44 to 52 (IGEGTFGEV) and lysine 67. Catalysis depends on aspartate 168, which acts as the Proton acceptor. Composition is skewed to basic and acidic residues over residues 360–523 (LDNH…RDSR), 545–570 (DYDR…DMTR), and 594–623 (DKVE…KSRD). A disordered region spans residues 360 to 706 (LDNHKRREQE…YGRKRPRIER (347 aa)). Pro residues predominate over residues 625–648 (GPPPGPPLPADGPPPPPSSNPPRP). Over residues 659–706 (WRRDSRDRRESRDRDGRDRDGRDRRLSSSRYARDEFDEYGRKRPRIER) the composition is skewed to basic and acidic residues.

It belongs to the protein kinase superfamily. CMGC Ser/Thr protein kinase family. CDC2/CDKX subfamily.

The protein resides in the nucleus. The enzyme catalyses L-seryl-[protein] + ATP = O-phospho-L-seryl-[protein] + ADP + H(+). The catalysed reaction is L-threonyl-[protein] + ATP = O-phospho-L-threonyl-[protein] + ADP + H(+). It catalyses the reaction [DNA-directed RNA polymerase] + ATP = phospho-[DNA-directed RNA polymerase] + ADP + H(+). Functionally, serine/threonine-protein kinase involved in transcription regulation. Phosphorylates the UBC2/RAD6 ubiquitin-conjugating enzyme (E2), leading to monoubiquitination of histone H2B and the silencing of telomeric-associated genes. Also required for histone H3 methylation. Necessary for the recovery from pheromone-induced growth arrest in the cell cycle G1 phase. The protein is Serine/threonine-protein kinase BUR1 (BUR1) of Yarrowia lipolytica (strain CLIB 122 / E 150) (Yeast).